A 221-amino-acid chain; its full sequence is uncharacterized protein (221 aa).

The protein resides in the mitochondrion. This is an uncharacterized protein from Paramecium tetraurelia.